The sequence spans 99 residues: Sm-like protein LSM7 (99 aa).

The Sm domain occupies 6 to 86; the sequence is ETVLDLAKFV…VMLVSPTDGT (81 aa).

The protein belongs to the snRNP Sm proteins family. In terms of assembly, component of the heptameric LSM1-LSM7 complex that forms a seven-membered ring structure with a donut shape. The LSM subunits are arranged in the order LSM1, LSM2, LSM3, LSM6, LSM5, LSM7 and LSM4. Component of the heptameric LSM2-LSM8 complex that forms a seven-membered ring structure with a donut shape. The LSM subunits are arranged in the order LSM8, LSM2, LSM3, LSM6, LSM5, LSM7 and LSM4. LSM7 subunit interacts only with its two neighboring subunits, LSM5 and LSM4. Expressed in roots, leaves, stems, flowers and siliques.

It is found in the cytoplasm. It localises to the nucleus. In terms of biological role, component of LSM protein complexes, which are involved in RNA processing. Component of the cytoplasmic LSM1-LSM7 complex which is involved in mRNA degradation by promoting decapping and leading to accurate 5'-3' mRNA decay. The cytoplasmic LSM1-LSM7 complex regulates developmental gene expression by the decapping of specific development-related transcripts. Component of the nuclear LSM2-LSM8 complex which is involved splicing nuclear mRNAs. LSM2-LSM8 binds directly to the U6 small nuclear RNAs (snRNAs) and is essential for accurate splicing of selected development-related mRNAs through the stabilization of the spliceosomal U6 snRNA. Plays a critical role in the regulation of development-related gene expression. This is Sm-like protein LSM7 from Arabidopsis thaliana (Mouse-ear cress).